Here is a 286-residue protein sequence, read N- to C-terminus: MNVRRAKTAGFCMGVSLALQKLNTALERRAGQSAGAGRICTLGPIIHNPQVLAEYETRGVVCVNDPAQLRQDDVAVIRAHGITRQVEQAVCASGATVVDATCPKVKKAQLSIARATSQGATLLLFGEEDHPEVRGLISYACGPAHVFGNAVELAALPLDPAQPYVLASQTTQDREIFTSIQESLSRALDDLTILSTICDATRERQEEARNIASSVDVMVVVGGRQSGNTRRLADVAALNGIATYHVESAEELEPKNFANKPRVGLTAGASTPKSLIDAAEKWLSSL.

Cys-12 contacts [4Fe-4S] cluster. Positions 47 and 80 each coordinate (2E)-4-hydroxy-3-methylbut-2-enyl diphosphate. His-47 and His-80 together coordinate dimethylallyl diphosphate. Isopentenyl diphosphate-binding residues include His-47 and His-80. A [4Fe-4S] cluster-binding site is contributed by Cys-102. A (2E)-4-hydroxy-3-methylbut-2-enyl diphosphate-binding site is contributed by His-130. His-130 contributes to the dimethylallyl diphosphate binding site. Position 130 (His-130) interacts with isopentenyl diphosphate. The Proton donor role is filled by Glu-132. Position 170 (Thr-170) interacts with (2E)-4-hydroxy-3-methylbut-2-enyl diphosphate. Residue Cys-198 coordinates [4Fe-4S] cluster. Ser-226, Asn-228, and Ser-270 together coordinate (2E)-4-hydroxy-3-methylbut-2-enyl diphosphate. Ser-226, Asn-228, and Ser-270 together coordinate dimethylallyl diphosphate. Isopentenyl diphosphate contacts are provided by Ser-226, Asn-228, and Ser-270.

This sequence belongs to the IspH family. [4Fe-4S] cluster is required as a cofactor.

The catalysed reaction is isopentenyl diphosphate + 2 oxidized [2Fe-2S]-[ferredoxin] + H2O = (2E)-4-hydroxy-3-methylbut-2-enyl diphosphate + 2 reduced [2Fe-2S]-[ferredoxin] + 2 H(+). It catalyses the reaction dimethylallyl diphosphate + 2 oxidized [2Fe-2S]-[ferredoxin] + H2O = (2E)-4-hydroxy-3-methylbut-2-enyl diphosphate + 2 reduced [2Fe-2S]-[ferredoxin] + 2 H(+). It participates in isoprenoid biosynthesis; dimethylallyl diphosphate biosynthesis; dimethylallyl diphosphate from (2E)-4-hydroxy-3-methylbutenyl diphosphate: step 1/1. The protein operates within isoprenoid biosynthesis; isopentenyl diphosphate biosynthesis via DXP pathway; isopentenyl diphosphate from 1-deoxy-D-xylulose 5-phosphate: step 6/6. Catalyzes the conversion of 1-hydroxy-2-methyl-2-(E)-butenyl 4-diphosphate (HMBPP) into a mixture of isopentenyl diphosphate (IPP) and dimethylallyl diphosphate (DMAPP). Acts in the terminal step of the DOXP/MEP pathway for isoprenoid precursor biosynthesis. In Desulfovibrio desulfuricans (strain ATCC 27774 / DSM 6949 / MB), this protein is 4-hydroxy-3-methylbut-2-enyl diphosphate reductase.